Consider the following 457-residue polypeptide: Endo-1,3(4)-beta-glucanase ARB_04519 (457 aa).

The N-terminal stretch at 1-18 is a signal peptide; it reads MRTTGLLLLGALAELGSA. Residues 19–319 form the GH16 domain; the sequence is TYILEDDYQP…YMKVYQQGTA (301 aa). Glu130 functions as the Nucleophile in the catalytic mechanism. The active-site Proton donor is Glu135. N-linked (GlcNAc...) asparagine glycosylation is present at Asn200. Residues 318-397 form a disordered region; it reads TAPTKPSQAP…DSCPPPTQPA (80 aa). Residues 333–352 show a composition bias toward low complexity; the sequence is TPALPTMKSTSTVSSMVSAT. The segment covering 353–362 has biased composition (polar residues); the sequence is QPAPTASNPT. Over residues 368 to 378 the composition is skewed to low complexity; it reads PSSSSSNNGPQ.

The protein belongs to the glycosyl hydrolase 16 family.

It is found in the secreted. The catalysed reaction is Endohydrolysis of (1-&gt;3)- or (1-&gt;4)-linkages in beta-D-glucans when the glucose residue whose reducing group is involved in the linkage to be hydrolyzed is itself substituted at C-3.. Its function is as follows. Mixed-linked glucanase involved in the degradation of complex natural cellulosic substrates. Active on laminarin. lichenan, soluble carboxymethyl cellulose but not on pustulan. This chain is Endo-1,3(4)-beta-glucanase ARB_04519, found in Arthroderma benhamiae (strain ATCC MYA-4681 / CBS 112371) (Trichophyton mentagrophytes).